The sequence spans 380 residues: Histidinol-phosphate aminotransferase 1 (380 aa).

Lysine 235 is subject to N6-(pyridoxal phosphate)lysine.

This sequence belongs to the class-II pyridoxal-phosphate-dependent aminotransferase family. Histidinol-phosphate aminotransferase subfamily. In terms of assembly, homodimer. Pyridoxal 5'-phosphate serves as cofactor.

The catalysed reaction is L-histidinol phosphate + 2-oxoglutarate = 3-(imidazol-4-yl)-2-oxopropyl phosphate + L-glutamate. It functions in the pathway amino-acid biosynthesis; L-histidine biosynthesis; L-histidine from 5-phospho-alpha-D-ribose 1-diphosphate: step 7/9. This chain is Histidinol-phosphate aminotransferase 1, found in Psychrobacter arcticus (strain DSM 17307 / VKM B-2377 / 273-4).